The chain runs to 293 residues: Phosphate import ATP-binding protein PstB (293 aa).

The ABC transporter domain occupies 46 to 288 (MTCRKVDVHY…PGHQLTEDYI (243 aa)). 78-85 (GPSGCGKS) contacts ATP.

It belongs to the ABC transporter superfamily. Phosphate importer (TC 3.A.1.7) family. The complex is composed of two ATP-binding proteins (PstB), two transmembrane proteins (PstC and PstA) and a solute-binding protein (PstS).

Its subcellular location is the cell inner membrane. It carries out the reaction phosphate(out) + ATP + H2O = ADP + 2 phosphate(in) + H(+). Functionally, part of the ABC transporter complex PstSACB involved in phosphate import. Responsible for energy coupling to the transport system. The protein is Phosphate import ATP-binding protein PstB of Desulfotalea psychrophila (strain LSv54 / DSM 12343).